The primary structure comprises 178 residues: Large ribosomal subunit protein uL6 (178 aa).

Belongs to the universal ribosomal protein uL6 family. In terms of assembly, part of the 50S ribosomal subunit.

Its function is as follows. This protein binds to the 23S rRNA, and is important in its secondary structure. It is located near the subunit interface in the base of the L7/L12 stalk, and near the tRNA binding site of the peptidyltransferase center. The sequence is that of Large ribosomal subunit protein uL6 from Francisella tularensis subsp. novicida (strain U112).